A 354-amino-acid polypeptide reads, in one-letter code: Guanine nucleotide-binding protein G(o) subunit alpha (354 aa).

The N-myristoyl glycine moiety is linked to residue glycine 2. Cysteine 3 carries S-palmitoyl cysteine lipidation. One can recognise a G-alpha domain in the interval 32-354 (KDVKLLLLGA…ANNLRGCGLY (323 aa)). The interval 35–48 (KLLLLGAGESGKST) is G1 motif. Residues glutamate 43, lysine 46, serine 47, threonine 48, serine 152, leucine 176, arginine 177, threonine 178, and arginine 179 each coordinate GTP. Serine 47 serves as a coordination point for Mg(2+). The tract at residues 174–182 (DILRTRVKT) is G2 motif. Threonine 182 serves as a coordination point for Mg(2+). Residues 197 to 206 (FRLFDVGGQR) form a G3 motif region. 5-glutamyl histamine is present on glutamine 205. Positions 266 to 273 (ILFLNKKD) are G4 motif. Residues asparagine 270, aspartate 273, and cysteine 325 each contribute to the GTP site. Positions 324-329 (TCATDT) are G5 motif. Residue cysteine 351 is the site of S-palmitoyl cysteine attachment.

Belongs to the G-alpha family. G(i/o/t/z) subfamily. In terms of assembly, g proteins are composed of 3 units; alpha, beta and gamma. The alpha chain contains the guanine nucleotide binding site. Forms a complex with GNB1 and GNG3. Interacts with RGS14. Interacts with RGS16. Interacts with RGS19. Interacts (when palmitoylated) with ADGRG3. Post-translationally, histaminylated at Gln-205 residues by TGM2.

The protein localises to the cell membrane. The protein resides in the membrane. The catalysed reaction is GTP + H2O = GDP + phosphate + H(+). The GTPase activity is promoted by GTPAse activators, such as RGS14, RGS16 and RGS19. Its function is as follows. Guanine nucleotide-binding proteins (G proteins) function as transducers downstream of G protein-coupled receptors (GPCRs) in numerous signaling cascades. The alpha chain contains the guanine nucleotide binding site and alternates between an active, GTP-bound state and an inactive, GDP-bound state. Signaling by an activated GPCR promotes GDP release and GTP binding. The alpha subunit has a low GTPase activity that converts bound GTP to GDP, thereby terminating the signal. Both GDP release and GTP hydrolysis are modulated by numerous regulatory proteins. Signaling is mediated via effector proteins, such as adenylate cyclase. Inhibits adenylate cyclase activity, leading to decreased intracellular cAMP levels. In Bos taurus (Bovine), this protein is Guanine nucleotide-binding protein G(o) subunit alpha (GNAO1).